The following is a 451-amino-acid chain: Adenylyltransferase and sulfurtransferase MOCS3 (451 aa).

T60 carries the post-translational modification Phosphothreonine. ATP is bound by residues G99, D120, 127–131 (SNFHR), K144, and 188–189 (DN). Positions 229 and 232 each coordinate Zn(2+). C246 acts as the Glycyl thioester intermediate; for adenylyltransferase activity in catalysis. C304 and C307 together coordinate Zn(2+). The 97-residue stretch at 353 to 449 (QQQPHLLIDV…WTHKVDPSFP (97 aa)) folds into the Rhodanese domain. C408 functions as the Cysteine persulfide intermediate; for sulfurtransferase activity in the catalytic mechanism.

In the N-terminal section; belongs to the HesA/MoeB/ThiF family. UBA4 subfamily. Zn(2+) is required as a cofactor.

The protein resides in the cytoplasm. It localises to the cytosol. It catalyses the reaction [molybdopterin-synthase sulfur-carrier protein]-C-terminal Gly-Gly + ATP + H(+) = [molybdopterin-synthase sulfur-carrier protein]-C-terminal Gly-Gly-AMP + diphosphate. The enzyme catalyses [molybdopterin-synthase sulfur-carrier protein]-C-terminal Gly-Gly-AMP + S-sulfanyl-L-cysteinyl-[cysteine desulfurase] + AH2 = [molybdopterin-synthase sulfur-carrier protein]-C-terminal-Gly-aminoethanethioate + L-cysteinyl-[cysteine desulfurase] + A + AMP + 2 H(+). It participates in tRNA modification; 5-methoxycarbonylmethyl-2-thiouridine-tRNA biosynthesis. The protein operates within cofactor biosynthesis; molybdopterin biosynthesis. Functionally, plays a central role in 2-thiolation of mcm(5)S(2)U at tRNA wobble positions of cytosolic tRNA(Lys), tRNA(Glu) and tRNA(Gln). Also essential during biosynthesis of the molybdenum cofactor. Acts by mediating the C-terminal thiocarboxylation of sulfur carriers URM1 and MOCS2A. Its N-terminus first activates URM1 and MOCS2A as acyl-adenylates (-COAMP), then the persulfide sulfur on the catalytic cysteine is transferred to URM1 and MOCS2A to form thiocarboxylation (-COSH) of their C-terminus. The reaction probably involves hydrogen sulfide that is generated from the persulfide intermediate and that acts as a nucleophile towards URM1 and MOCS2A. Subsequently, a transient disulfide bond is formed. Does not use thiosulfate as sulfur donor; NFS1 probably acting as a sulfur donor for thiocarboxylation reactions. This chain is Adenylyltransferase and sulfurtransferase MOCS3, found in Drosophila ananassae (Fruit fly).